The sequence spans 1012 residues: PHD finger protein 20 (1012 aa).

Tudor domains lie at 4-69 (HPPN…RPLE) and 83-147 (GSSE…GNAR). Positions 142 to 336 (IVGNARPKET…RSSRLSTNGT (195 aa)) are disordered. Basic and acidic residues predominate over residues 147–245 (RPKETDHKSL…QVDKKPENDI (99 aa)). Ser159 bears the Phosphoserine mark. The a.T hook DNA-binding region spans 257–269 (KRKRGRPPSIAPT). The span at 271–280 (VDSNSQTLQP) shows a compositional bias: polar residues. Over residues 297-325 (PLKRPRLDKNSSQEKSKNYSENTDKDLSR) the composition is skewed to basic and acidic residues. The C2H2-type zinc-finger motif lies at 452-477 (FRCKVVDCLKFFRKAKLLHYHMKYFH). A compositionally biased stretch (basic and acidic residues) spans 481–490 (KSLEPEESPG). Residues 481–611 (KSLEPEESPG…KGKVKALEED (131 aa)) form a disordered region. Ser488 is modified (phosphoserine). Over residues 497 to 509 (RGPSASDKPSQET) the composition is skewed to polar residues. The span at 522-538 (TKDKEKNKEKKFKEFVR) shows a compositional bias: basic and acidic residues. Positions 539–551 (VKPKKKKKKKKKT) are enriched in basic residues. Residues 654–700 (RCICEVQEENDFMIQCEECQCWQHGVCMGLLEENVPEKYTCYVCQDP) form a PHD-type zinc finger. Position 843 is an N6-acetyllysine (Lys843). Positions 866 to 912 (DAVNPLHENGDDSLSPRLGWPLDQDRSKGDSDPKPGSPKVKEYVSKK) are disordered. A phosphoserine mark is found at Ser878 and Ser880. Residues 888-912 (DQDRSKGDSDPKPGSPKVKEYVSKK) show a composition bias toward basic and acidic residues.

As to quaternary structure, homodimer; disulfide-linked. Component of some MLL1/MLL complex, at least composed of the core components KMT2A/MLL1, ASH2L, HCFC1, WDR5 and RBBP5, as well as the facultative components BACC1, CHD8, E2F6, HSP70, INO80C, KANSL1, LAS1L, MAX, MCRS1, MGA, KAT8/MOF, PELP1, PHF20, PRP31, RING2, RUVB1/TIP49A, RUVB2/TIP49B, SENP3, TAF1, TAF4, TAF6, TAF7, TAF9 and TEX10. Component of the NSL complex at least composed of MOF/KAT8, KANSL1, KANSL2, KANSL3, MCRS1, PHF20, OGT1/OGT, WDR5 and HCFC1. Post-translationally, ubiquitinated by TRIM26; leading to proteasomal degradation. Expressed in heart, kidney, liver, lung, pancreas, placenta, spleen and testis. Not expressed in brain, skeletal muscle, colon, ovary, prostate, small intestine and thymus. Expressed in colon and ovary cancer cell lines while it is not expressed in the respective normal tissues.

The protein resides in the nucleus. Methyllysine-binding protein, component of the MOF histone acetyltransferase protein complex. Not required for maintaining the global histone H4 'Lys-16' acetylation (H4K16ac) levels or locus specific histone acetylation, but instead works downstream in transcriptional regulation of MOF target genes. As part of the NSL complex it may be involved in acetylation of nucleosomal histone H4 on several lysine residues. Contributes to methyllysine-dependent p53/TP53 stabilization and up-regulation after DNA damage. This Homo sapiens (Human) protein is PHD finger protein 20 (PHF20).